Consider the following 83-residue polypeptide: UPF0512 protein W (83 aa).

It belongs to the UPF0512 family.

This is UPF0512 protein W from Dictyostelium discoideum (Social amoeba).